A 185-amino-acid polypeptide reads, in one-letter code: Elongation factor P (185 aa).

This sequence belongs to the elongation factor P family.

It is found in the cytoplasm. It functions in the pathway protein biosynthesis; polypeptide chain elongation. Functionally, involved in peptide bond synthesis. Stimulates efficient translation and peptide-bond synthesis on native or reconstituted 70S ribosomes in vitro. Probably functions indirectly by altering the affinity of the ribosome for aminoacyl-tRNA, thus increasing their reactivity as acceptors for peptidyl transferase. This chain is Elongation factor P, found in Rippkaea orientalis (strain PCC 8801 / RF-1) (Cyanothece sp. (strain PCC 8801)).